Reading from the N-terminus, the 429-residue chain is Metacaspase-1A (429 aa).

Positions 1–68 are disordered; the sequence is MQHHHQGSYG…PQHNGGQMYG (68 aa). A compositionally biased stretch (gly residues) spans 8-19; it reads SYGGGGGGGGYP. Over residues 20-45 the composition is skewed to low complexity; it reads GQAYREQNPYGYGQQSPQQGYGAPQQ. Over residues 46–62 the composition is skewed to polar residues; sequence HNGYNQPPSGYGQPQHN. Active-site residues include histidine 220 and cysteine 276.

Belongs to the peptidase C14B family.

In terms of biological role, involved in cell death (apoptosis). This chain is Metacaspase-1A (casA), found in Aspergillus clavatus (strain ATCC 1007 / CBS 513.65 / DSM 816 / NCTC 3887 / NRRL 1 / QM 1276 / 107).